Here is a 217-residue protein sequence, read N- to C-terminus: Vacuolar protein-sorting-associated protein 37 homolog 1 (217 aa).

The interval 1–49 (MFNFWGSKDQQQGQSRPQEASSQSPWYSPSLVSSPSSSRPQSSGQISAQ) is disordered. Positions 8-20 (KDQQQGQSRPQEA) are enriched in polar residues. Positions 21–47 (SSQSPWYSPSLVSSPSSSRPQSSGQIS) are enriched in low complexity. The VPS37 C-terminal domain occupies 137–217 (QEKLNELERQ…IHLAAKTSNI (81 aa)).

The protein belongs to the VPS37 family. In terms of assembly, component of the endosomal sorting required for transport complex I (ESCRT-I), composed of ELC, VPS28 and VPS37. Interacts with ELC.

The protein resides in the endosome. Component of the ESCRT-I complex (endosomal sorting complex required for transport I), a regulator of vesicular trafficking process. Required for the sorting of endocytic ubiquitinated cargos into multivesicular bodies (MVBs). The polypeptide is Vacuolar protein-sorting-associated protein 37 homolog 1 (VPS37-1) (Arabidopsis thaliana (Mouse-ear cress)).